The sequence spans 562 residues: Sulfite reductase [NADPH] hemoprotein beta-component (562 aa).

4 residues coordinate [4Fe-4S] cluster: Cys425, Cys431, Cys470, and Cys474. Cys474 contributes to the siroheme binding site.

It belongs to the nitrite and sulfite reductase 4Fe-4S domain family. As to quaternary structure, alpha(8)-beta(8). The alpha component is a flavoprotein, the beta component is a hemoprotein. Siroheme is required as a cofactor. [4Fe-4S] cluster serves as cofactor.

It carries out the reaction hydrogen sulfide + 3 NADP(+) + 3 H2O = sulfite + 3 NADPH + 4 H(+). Its pathway is sulfur metabolism; hydrogen sulfide biosynthesis; hydrogen sulfide from sulfite (NADPH route): step 1/1. In terms of biological role, component of the sulfite reductase complex that catalyzes the 6-electron reduction of sulfite to sulfide. This is one of several activities required for the biosynthesis of L-cysteine from sulfate. This Tolumonas auensis (strain DSM 9187 / NBRC 110442 / TA 4) protein is Sulfite reductase [NADPH] hemoprotein beta-component.